The chain runs to 544 residues: Zinc finger protein 502 (544 aa).

A Glycyl lysine isopeptide (Lys-Gly) (interchain with G-Cter in SUMO2) cross-link involves residue Lys-43. 14 consecutive C2H2-type zinc fingers follow at residues 155 to 177 (WKCN…QRTH), 183 to 205 (YTCE…QRIH), 211 to 233 (YGCE…QRIH), 239 to 261 (YKCN…QRIH), 267 to 289 (YKCN…QRIH), 295 to 317 (YICS…QRIH), 323 to 345 (HKCD…QRIH), 351 to 373 (YKCK…QRIH), 379 to 401 (YKCK…QRIH), 407 to 429 (YKCS…QRSH), 435 to 457 (YKCN…MRIH), 463 to 485 (YKCK…HRTH), 491 to 513 (YKCS…YRIH), and 519 to 541 (YECI…QKLH).

It belongs to the krueppel C2H2-type zinc-finger protein family. (Microbial infection) Interacts with human respiratory syncytial virus (HRSV) matrix protein; this interaction probably facilitates viral release.

It localises to the nucleus. Its function is as follows. May be involved in transcriptional regulation. The chain is Zinc finger protein 502 (ZNF502) from Homo sapiens (Human).